Here is a 399-residue protein sequence, read N- to C-terminus: CCA-adding enzyme (399 aa).

Residues G32 and R35 each coordinate ATP. Residues G32 and R35 each contribute to the CTP site. Residues D45 and D47 each coordinate Mg(2+). Residues R116, D159, R162, R165, and R168 each coordinate ATP. CTP-binding residues include R116, D159, R162, R165, and R168.

This sequence belongs to the tRNA nucleotidyltransferase/poly(A) polymerase family. Bacterial CCA-adding enzyme type 3 subfamily. Homodimer. Requires Mg(2+) as cofactor.

The enzyme catalyses a tRNA precursor + 2 CTP + ATP = a tRNA with a 3' CCA end + 3 diphosphate. The catalysed reaction is a tRNA with a 3' CCA end + 2 CTP + ATP = a tRNA with a 3' CCACCA end + 3 diphosphate. Functionally, catalyzes the addition and repair of the essential 3'-terminal CCA sequence in tRNAs without using a nucleic acid template. Adds these three nucleotides in the order of C, C, and A to the tRNA nucleotide-73, using CTP and ATP as substrates and producing inorganic pyrophosphate. tRNA 3'-terminal CCA addition is required both for tRNA processing and repair. Also involved in tRNA surveillance by mediating tandem CCA addition to generate a CCACCA at the 3' terminus of unstable tRNAs. While stable tRNAs receive only 3'-terminal CCA, unstable tRNAs are marked with CCACCA and rapidly degraded. This Streptococcus pneumoniae serotype 4 (strain ATCC BAA-334 / TIGR4) protein is CCA-adding enzyme.